The primary structure comprises 874 residues: Valine--tRNA ligase (874 aa).

Residues 42–52 (PNITGRIHIGH) carry the 'HIGH' region motif. Positions 522-526 (KMSKS) match the 'KMSKS' region motif. An ATP-binding site is contributed by lysine 525. Positions 806 to 874 (DYIDIDTEKQ…KLQALLKEIS (69 aa)) form a coiled coil.

The protein belongs to the class-I aminoacyl-tRNA synthetase family. ValS type 1 subfamily. Monomer.

It localises to the cytoplasm. It carries out the reaction tRNA(Val) + L-valine + ATP = L-valyl-tRNA(Val) + AMP + diphosphate. In terms of biological role, catalyzes the attachment of valine to tRNA(Val). As ValRS can inadvertently accommodate and process structurally similar amino acids such as threonine, to avoid such errors, it has a 'posttransfer' editing activity that hydrolyzes mischarged Thr-tRNA(Val) in a tRNA-dependent manner. This chain is Valine--tRNA ligase, found in Petrotoga mobilis (strain DSM 10674 / SJ95).